The primary structure comprises 135 residues: Large ribosomal subunit protein uL16c (135 aa).

It belongs to the universal ribosomal protein uL16 family. Part of the 50S ribosomal subunit.

Its subcellular location is the plastid. The protein localises to the chloroplast. The polypeptide is Large ribosomal subunit protein uL16c (Gossypium hirsutum (Upland cotton)).